Consider the following 295-residue polypeptide: Glycine--tRNA ligase alpha subunit (295 aa).

It belongs to the class-II aminoacyl-tRNA synthetase family. As to quaternary structure, tetramer of two alpha and two beta subunits.

The protein localises to the cytoplasm. The catalysed reaction is tRNA(Gly) + glycine + ATP = glycyl-tRNA(Gly) + AMP + diphosphate. This chain is Glycine--tRNA ligase alpha subunit, found in Rhodospirillum rubrum (strain ATCC 11170 / ATH 1.1.1 / DSM 467 / LMG 4362 / NCIMB 8255 / S1).